Reading from the N-terminus, the 377-residue chain is Probable riboflavin import permease protein RfuC (377 aa).

The next 10 membrane-spanning stretches (helical) occupy residues 4-24 (VINS…VIVL), 49-69 (ALFH…CALK), 72-92 (MINL…ALLL), 98-118 (VGFL…AGIL), 135-155 (ITSF…IITV), 182-202 (FGVP…GCFF), 223-245 (FVGF…LFGL), 249-268 (FSVV…GMGY), 274-294 (ALIA…FAWM), and 303-323 (LGAH…FLLI).

The protein belongs to the binding-protein-dependent transport system permease family. In terms of assembly, the complex is probably composed of two ATP-binding proteins (RfuB), two transmembrane proteins (RfuC and RfuD) and a solute-binding protein (RfuA).

It is found in the cell inner membrane. Probably part of the ABC transporter complex RfuABCD involved in riboflavin import. Probably responsible for the translocation of the substrate across the membrane. This Treponema pallidum (strain Nichols) protein is Probable riboflavin import permease protein RfuC.